Consider the following 603-residue polypeptide: Penicillin-binding protein activator LpoA (603 aa).

The first 26 residues, 1 to 26 (MAMNHHQRRSVPRLLTPIALSIVLSA), serve as a signal peptide directing secretion. C27 carries the N-palmitoyl cysteine lipid modification. Residue C27 is the site of S-diacylglycerol cysteine attachment.

It belongs to the LpoA family. As to quaternary structure, interacts with PBP1a.

The protein resides in the cell outer membrane. Functionally, regulator of peptidoglycan synthesis that is essential for the function of penicillin-binding protein 1A (PBP1a). The chain is Penicillin-binding protein activator LpoA from Vibrio cholerae serotype O1 (strain ATCC 39541 / Classical Ogawa 395 / O395).